A 387-amino-acid polypeptide reads, in one-letter code: Early growth response protein 3 (387 aa).

The segment at 241–283 (PGFGSLPQPPLTLKPIRPRKYPNRPSKTPLHERPHACPAEGCD) is disordered. Residues 269-283 (PLHERPHACPAEGCD) show a composition bias toward basic and acidic residues. 3 consecutive C2H2-type zinc fingers follow at residues 275-299 (HACP…LRIH), 305-327 (FQCR…IRTH), and 333-355 (FACE…AKIH). The disordered stretch occupies residues 348–387 (RKRHAKIHLKQKEKKAEKGGAPSASSAPPVSLAPVVTTCA). Positions 350 to 360 (RHAKIHLKQKE) are enriched in basic residues. Positions 368–387 (APSASSAPPVSLAPVVTTCA) are enriched in low complexity.

This sequence belongs to the EGR C2H2-type zinc-finger protein family.

Its subcellular location is the nucleus. Its function is as follows. Probable transcription factor involved in muscle spindle development. The chain is Early growth response protein 3 (EGR3) from Homo sapiens (Human).